A 274-amino-acid polypeptide reads, in one-letter code: 2,3,4,5-tetrahydropyridine-2,6-dicarboxylate N-succinyltransferase (274 aa).

Belongs to the transferase hexapeptide repeat family.

Its subcellular location is the cytoplasm. It carries out the reaction (S)-2,3,4,5-tetrahydrodipicolinate + succinyl-CoA + H2O = (S)-2-succinylamino-6-oxoheptanedioate + CoA. The protein operates within amino-acid biosynthesis; L-lysine biosynthesis via DAP pathway; LL-2,6-diaminopimelate from (S)-tetrahydrodipicolinate (succinylase route): step 1/3. In Salmonella heidelberg (strain SL476), this protein is 2,3,4,5-tetrahydropyridine-2,6-dicarboxylate N-succinyltransferase.